We begin with the raw amino-acid sequence, 498 residues long: Protein nucleotidyltransferase YdiU (498 aa).

ATP is bound by residues G88, G90, R91, K111, D123, G124, R174, and R181. The Proton acceptor role is filled by D250. Mg(2+)-binding residues include N251 and D260. D260 is a binding site for ATP.

This sequence belongs to the SELO family. The cofactor is Mg(2+). It depends on Mn(2+) as a cofactor.

The catalysed reaction is L-seryl-[protein] + ATP = 3-O-(5'-adenylyl)-L-seryl-[protein] + diphosphate. It catalyses the reaction L-threonyl-[protein] + ATP = 3-O-(5'-adenylyl)-L-threonyl-[protein] + diphosphate. The enzyme catalyses L-tyrosyl-[protein] + ATP = O-(5'-adenylyl)-L-tyrosyl-[protein] + diphosphate. It carries out the reaction L-histidyl-[protein] + UTP = N(tele)-(5'-uridylyl)-L-histidyl-[protein] + diphosphate. The catalysed reaction is L-seryl-[protein] + UTP = O-(5'-uridylyl)-L-seryl-[protein] + diphosphate. It catalyses the reaction L-tyrosyl-[protein] + UTP = O-(5'-uridylyl)-L-tyrosyl-[protein] + diphosphate. Nucleotidyltransferase involved in the post-translational modification of proteins. It can catalyze the addition of adenosine monophosphate (AMP) or uridine monophosphate (UMP) to a protein, resulting in modifications known as AMPylation and UMPylation. The sequence is that of Protein nucleotidyltransferase YdiU from Methylorubrum populi (strain ATCC BAA-705 / NCIMB 13946 / BJ001) (Methylobacterium populi).